Here is a 717-residue protein sequence, read N- to C-terminus: Fatty acid oxidation complex subunit alpha (717 aa).

The segment at M1–A190 is enoyl-CoA hydratase/isomerase. Residue D298 participates in substrate binding. The tract at residues H313–G717 is 3-hydroxyacyl-CoA dehydrogenase. NAD(+)-binding positions include M326, D345, V402–E404, K409, and S431. The active-site For 3-hydroxyacyl-CoA dehydrogenase activity is the H452. N455 is an NAD(+) binding site. N502 lines the substrate pocket.

It in the N-terminal section; belongs to the enoyl-CoA hydratase/isomerase family. In the C-terminal section; belongs to the 3-hydroxyacyl-CoA dehydrogenase family. Heterotetramer of two alpha chains (FadB) and two beta chains (FadA).

It carries out the reaction a (3S)-3-hydroxyacyl-CoA + NAD(+) = a 3-oxoacyl-CoA + NADH + H(+). It catalyses the reaction a (3S)-3-hydroxyacyl-CoA = a (2E)-enoyl-CoA + H2O. The enzyme catalyses a 4-saturated-(3S)-3-hydroxyacyl-CoA = a (3E)-enoyl-CoA + H2O. The catalysed reaction is (3S)-3-hydroxybutanoyl-CoA = (3R)-3-hydroxybutanoyl-CoA. It carries out the reaction a (3Z)-enoyl-CoA = a 4-saturated (2E)-enoyl-CoA. It catalyses the reaction a (3E)-enoyl-CoA = a 4-saturated (2E)-enoyl-CoA. Its pathway is lipid metabolism; fatty acid beta-oxidation. Involved in the aerobic and anaerobic degradation of long-chain fatty acids via beta-oxidation cycle. Catalyzes the formation of 3-oxoacyl-CoA from enoyl-CoA via L-3-hydroxyacyl-CoA. It can also use D-3-hydroxyacyl-CoA and cis-3-enoyl-CoA as substrate. This chain is Fatty acid oxidation complex subunit alpha, found in Acinetobacter baumannii (strain AB307-0294).